The primary structure comprises 312 residues: Serine acetyltransferase 5 (312 aa).

A compositionally biased stretch (basic and acidic residues) spans 1–17; it reads MPPAGELRHQSPSKEKL. A disordered region spans residues 1-25; it reads MPPAGELRHQSPSKEKLSSVTQSDE.

This sequence belongs to the transferase hexapeptide repeat family. In terms of assembly, homomultimer. Mostly expressed in stems, flowers and siliques. Localized in vascular tissues, particularly in phloem.

The protein localises to the cytoplasm. It carries out the reaction L-serine + acetyl-CoA = O-acetyl-L-serine + CoA. It functions in the pathway amino-acid biosynthesis; L-cysteine biosynthesis; L-cysteine from L-serine: step 1/2. Feedback inhibitions by L-Ser and acetyl-CoA. The protein is Serine acetyltransferase 5 (SAT5) of Arabidopsis thaliana (Mouse-ear cress).